A 179-amino-acid chain; its full sequence is ADP-ribosylation factor-like protein 5A (179 aa).

G2 carries the N-myristoyl glycine lipid modification. Residues G23 to T30, D66 to Q70, N125 to D128, and A159 contribute to the GTP site.

The protein belongs to the small GTPase superfamily. Arf family.

In terms of biological role, lacks ADP-ribosylation enhancing activity. This chain is ADP-ribosylation factor-like protein 5A (ARL5A), found in Bos taurus (Bovine).